The sequence spans 279 residues: MKVISSIQELRDQLRGQNRTAFVPTMGNLHEGHLSLMRLARQHGDPVVASIFVNRLQFGPNEDFDKYPRTLQDDIEKLQQNNVYVLFAPTERDMYPEPQEYRVLPPDDLGGILEGEFRPGFFAGVCTVVTKLMSCVQPRVAVFGKKDYQQLMIVRRMCQQLALPVEIIAAETVRDEDGLALSSRNRYLTTDERKEAPELAKTLQRVRDSVLGGERDLGKLEQHAHTHLAERGWVPDYIAIRRRANLIAPSAAELEAGEPLVVLAAAKLGATRLIDNLEI.

Position 26 to 33 (26 to 33 (MGNLHEGH)) interacts with ATP. His-33 acts as the Proton donor in catalysis. Gln-57 is a (R)-pantoate binding site. Gln-57 contributes to the beta-alanine binding site. 144-147 (GKKD) serves as a coordination point for ATP. Gln-150 is a binding site for (R)-pantoate. ATP-binding positions include Val-173 and 181–184 (LSSR).

This sequence belongs to the pantothenate synthetase family. Homodimer.

It localises to the cytoplasm. It catalyses the reaction (R)-pantoate + beta-alanine + ATP = (R)-pantothenate + AMP + diphosphate + H(+). It functions in the pathway cofactor biosynthesis; (R)-pantothenate biosynthesis; (R)-pantothenate from (R)-pantoate and beta-alanine: step 1/1. Its function is as follows. Catalyzes the condensation of pantoate with beta-alanine in an ATP-dependent reaction via a pantoyl-adenylate intermediate. The polypeptide is Pantothenate synthetase (Burkholderia cenocepacia (strain HI2424)).